The sequence spans 152 residues: Small ribosomal subunit protein bS6 (152 aa).

Positions 94 to 152 (VKQEGPLPTPKPSNKSSTQSENKDNPETKVESKEEQSVTNSDTSTTKKDDNEIKENTES) are disordered. 2 stretches are compositionally biased toward basic and acidic residues: residues 114–129 (ENKD…KEEQ) and 138–152 (TTKK…NTES).

It belongs to the bacterial ribosomal protein bS6 family.

Its function is as follows. Binds together with bS18 to 16S ribosomal RNA. In Prochlorococcus marinus (strain MIT 9312), this protein is Small ribosomal subunit protein bS6.